A 310-amino-acid polypeptide reads, in one-letter code: D-alanyl-D-alanine endopeptidase (310 aa).

Residues 1–23 (MRNRLLSLVTLFLSLSVATAVSA) form the signal peptide. S66 acts as the Acyl-ester intermediate in catalysis. The active-site Proton acceptor is the K69. The active site involves S123. A substrate-binding site is contributed by K230.

This sequence belongs to the peptidase S11 family.

The protein resides in the periplasm. Cell wall formation. This is D-alanyl-D-alanine endopeptidase (pbpG) from Pseudomonas aeruginosa (strain ATCC 15692 / DSM 22644 / CIP 104116 / JCM 14847 / LMG 12228 / 1C / PRS 101 / PAO1).